The primary structure comprises 260 residues: Glutamate racemase (260 aa).

Substrate contacts are provided by residues 14–15 and 46–47; these read DS and YG. The Proton donor/acceptor role is filled by C77. 78 to 79 is a substrate binding site; sequence NT. C188 acts as the Proton donor/acceptor in catalysis. Residue 189-190 participates in substrate binding; the sequence is TH.

Belongs to the aspartate/glutamate racemases family.

The enzyme catalyses L-glutamate = D-glutamate. It functions in the pathway cell wall biogenesis; peptidoglycan biosynthesis. In terms of biological role, provides the (R)-glutamate required for cell wall biosynthesis. The polypeptide is Glutamate racemase (Clostridium perfringens (strain 13 / Type A)).